The chain runs to 28 residues: Gamma-conotoxin-like de7a (28 aa).

Disulfide bonds link cysteine 2/cysteine 18, cysteine 9/cysteine 22, and cysteine 17/cysteine 27. Proline 4 is modified (4-hydroxyproline). A 4-carboxyglutamate mark is found at glutamate 13 and glutamate 16. Serine 28 carries the post-translational modification Serine amide.

This sequence belongs to the conotoxin O1 superfamily. As to expression, expressed by the venom duct.

The protein resides in the secreted. In terms of biological role, gamma-conotoxins may act on voltage-gated non-specific cation pacemaker channels (HCN). In Conasprella delessertii (Sozon's cone), this protein is Gamma-conotoxin-like de7a.